The sequence spans 446 residues: MNASPSTIVAIATAAGTGGIGIVRLSGPQSVQIAAALGIAGLQSRHARYARFRDAQGEVIDDGIAVWFPAPHSFTGEEVVELQGHGSPVLLRQLVARCIALGARQARAGEFSERAFLNGKLDLAQAEAIADLIAAGDLRAARAARRSLDGVFSRRVDAVSESLTRLRIHVEAAIDFADEPLDTLGGAQVREELTRTRALLAQLLRDAERGRKLRDGLHAVLIGPPNAGKSSLLNALAGSDRAIVTDVAGTTRDTLHEAIQLDGFELTLVDTAGLREGGDAIEREGMRRARAELQRADLALIVLDARDPQAARDALGDAIDAVPRRLWIHNKCDLLAVAGPMDADAIAVSAVTGQGLEHLHTRLRELALGDGIESVDGEFSARTRHVDALHRAEQHADAADLELRYEQLELAAEELRLAHEALGEITGKLSADDLLGKIFSSFCIGK.

(6S)-5-formyl-5,6,7,8-tetrahydrofolate is bound by residues Arg-24, Glu-81, and Lys-120. The TrmE-type G domain maps to 216–368; sequence GLHAVLIGPP…LHTRLRELAL (153 aa). Residue Asn-226 participates in K(+) binding. GTP contacts are provided by residues 226-231, 245-251, and 270-273; these read NAGKSS, TDVAGTT, and DTAG. Ser-230 contributes to the Mg(2+) binding site. Positions 245, 247, and 250 each coordinate K(+). Mg(2+) is bound at residue Thr-251. Lys-446 is a (6S)-5-formyl-5,6,7,8-tetrahydrofolate binding site.

Belongs to the TRAFAC class TrmE-Era-EngA-EngB-Septin-like GTPase superfamily. TrmE GTPase family. In terms of assembly, homodimer. Heterotetramer of two MnmE and two MnmG subunits. The cofactor is K(+).

The protein localises to the cytoplasm. Exhibits a very high intrinsic GTPase hydrolysis rate. Involved in the addition of a carboxymethylaminomethyl (cmnm) group at the wobble position (U34) of certain tRNAs, forming tRNA-cmnm(5)s(2)U34. This is tRNA modification GTPase MnmE from Xanthomonas campestris pv. campestris (strain B100).